The chain runs to 421 residues: MSKTHLTEQKFSDFALHPKVVEALEKKGFHNCTPIQALALPLTLAGRDVAGQAQTGTGKTMAFLTSTFHYLLSHPAIADRKVNQPRALIMAPTRELAVQIHADAEPLAQATGLKLGLAYGGDGYDKQLKVLESGVDILIGTTGRLIDYAKQNHINLGAIQVVVLDEADRMYDLGFIKDIRWLFRRMPPANQRLNMLFSATLSYRVRELAFEQMNNAEYIEVEPEQKTGHRIKEELFYPSNEEKMRLLQTLIEEEWPDRAIIFANTKHRCEEIWGHLAADGHRVGLLTGDVAQKKRLRILDEFTRGDLDILVATDVAARGLHIPAVTHVFNYDLPDDCEDYVHRIGRTGRAGASGHSISLACEEYALNLPAIETYIGHSIPVSKYNPDALMTDLPKPLRLTRPRTGNGPRRTGAPRNRRRSG.

The short motif at 9 to 37 (QKFSDFALHPKVVEALEKKGFHNCTPIQA) is the Q motif element. Residues 40–219 (LPLTLAGRDV…FEQMNNAEYI (180 aa)) form the Helicase ATP-binding domain. Residue 53-60 (AQTGTGKT) participates in ATP binding. The DEAD box signature appears at 165–168 (DEAD). The region spanning 245–390 (RLLQTLIEEE…VSKYNPDALM (146 aa)) is the Helicase C-terminal domain. The segment at 392-421 (DLPKPLRLTRPRTGNGPRRTGAPRNRRRSG) is disordered. Low complexity predominate over residues 402-414 (PRTGNGPRRTGAP).

Belongs to the DEAD box helicase family. RhlB subfamily. As to quaternary structure, component of the RNA degradosome, which is a multiprotein complex involved in RNA processing and mRNA degradation.

The protein resides in the cytoplasm. The catalysed reaction is ATP + H2O = ADP + phosphate + H(+). In terms of biological role, DEAD-box RNA helicase involved in RNA degradation. Has RNA-dependent ATPase activity and unwinds double-stranded RNA. This Escherichia fergusonii (strain ATCC 35469 / DSM 13698 / CCUG 18766 / IAM 14443 / JCM 21226 / LMG 7866 / NBRC 102419 / NCTC 12128 / CDC 0568-73) protein is ATP-dependent RNA helicase RhlB.